A 254-amino-acid chain; its full sequence is D-aminoacyl-tRNA deacylase (254 aa).

The disordered stretch occupies residues 61 to 83 (KPTLTVHTPGNLTEDNSHGGNPE). Positions 65–74 (TVHTPGNLTE) are enriched in polar residues.

Belongs to the DtdA deacylase family. As to quaternary structure, monomer. It depends on Zn(2+) as a cofactor.

It catalyses the reaction a D-aminoacyl-tRNA + H2O = a tRNA + a D-alpha-amino acid + H(+). It carries out the reaction glycyl-tRNA(Ala) + H2O = tRNA(Ala) + glycine + H(+). D-aminoacyl-tRNA deacylase with broad substrate specificity. By recycling D-aminoacyl-tRNA to D-amino acids and free tRNA molecules, this enzyme counteracts the toxicity associated with the formation of D-aminoacyl-tRNA entities in vivo. This Methanococcus maripaludis (strain C7 / ATCC BAA-1331) protein is D-aminoacyl-tRNA deacylase.